The primary structure comprises 616 residues: Chaperone protein HscA (616 aa).

This sequence belongs to the heat shock protein 70 family.

In terms of biological role, chaperone involved in the maturation of iron-sulfur cluster-containing proteins. Has a low intrinsic ATPase activity which is markedly stimulated by HscB. Involved in the maturation of IscU. The polypeptide is Chaperone protein HscA (Escherichia fergusonii (strain ATCC 35469 / DSM 13698 / CCUG 18766 / IAM 14443 / JCM 21226 / LMG 7866 / NBRC 102419 / NCTC 12128 / CDC 0568-73)).